The sequence spans 216 residues: Ras-related protein RabN1 (216 aa).

15–22 serves as a coordination point for GTP; the sequence is GDYNSGKT. The Effector region signature appears at 37-44; sequence TCPSTFDL. GTP-binding positions include 62–66 and 128–131; these read DTAGQ and TKSD. The S-geranylgeranyl cysteine moiety is linked to residue C216.

Belongs to the small GTPase superfamily. Rab family.

It localises to the cell membrane. The protein is Ras-related protein RabN1 (rabN1) of Dictyostelium discoideum (Social amoeba).